Reading from the N-terminus, the 588-residue chain is D-3-phosphoglycerate dehydrogenase 3, chloroplastic (588 aa).

The transit peptide at 1–38 directs the protein to the chloroplast; the sequence is MATSLNLSSIFSSSSRLVTTPSSVFPIRQRRRIILVTS. NAD(+) is bound by residues 195-196, Asp-215, 274-276, and Asp-300; these read KV and VAR. Residue Arg-276 is part of the active site. Glu-305 is an active-site residue. His-324 acts as the Proton donor in catalysis. 324 to 327 provides a ligand contact to NAD(+); the sequence is HLGA. Positions 516-588 constitute an ACT domain; sequence VILCRQVDQP…AIEEFVFLKL (73 aa).

The protein belongs to the D-isomer specific 2-hydroxyacid dehydrogenase family. In terms of tissue distribution, expressed in aerial parts. Not detected in roots and meristematic tissue. Expressed in cotyledons, adult leaves, stigma and anther filaments. Detected in the embryo.

Its subcellular location is the plastid. The protein localises to the chloroplast. The catalysed reaction is (2R)-3-phosphoglycerate + NAD(+) = 3-phosphooxypyruvate + NADH + H(+). It functions in the pathway amino-acid biosynthesis; L-serine biosynthesis; L-serine from 3-phospho-D-glycerate: step 1/3. Its activity is regulated as follows. Partially inhibited by 1 mM serine. Its function is as follows. Involved in the plastidial phosphorylated pathway of serine biosynthesis (PPSB). This Arabidopsis thaliana (Mouse-ear cress) protein is D-3-phosphoglycerate dehydrogenase 3, chloroplastic (PGDH3).